Consider the following 602-residue polypeptide: GTP-binding protein 1 (602 aa).

S2 is modified (phosphoserine). In terms of domain architecture, tr-type G spans 91 to 322; sequence FLEVRVAVVG…LNLLSPRTSY (232 aa). Residues 100–107 form a G1 region; sequence GNVDAGKS. 100 to 107 contributes to the GTP binding site; the sequence is GNVDAGKS. Residues 139–143 are G2; the sequence is GRTSS. The interval 185 to 188 is G3; sequence DLAG. Residues 185 to 189 and 241 to 244 contribute to the GTP site; these read DLAGH and TKID. The segment at 241–244 is G4; the sequence is TKID. Positions 299 to 301 are G5; it reads SNV. Residues 506–528 show a composition bias toward polar residues; sequence LLQTTNNSPMNSKPQQIKMQSTK. The tract at residues 506-602 is disordered; sequence LLQTTNNSPM…GACVTPASGC (97 aa). Residue S513 is modified to Phosphoserine. Basic residues predominate over residues 579-589; the sequence is GRRRGGQRYKV.

This sequence belongs to the TRAFAC class translation factor GTPase superfamily. Classic translation factor GTPase family. GTPBP1 subfamily. As to quaternary structure, interacts with EXOSC2/RRP4, EXOSC3/RRP40, EXOSC5/RRP46, HNRNPD, HNRNPR and SYNCRIP. Identified in a complex with AANAT mRNA, but does not bind mRNA by itself.

Its subcellular location is the cytoplasm. In terms of biological role, promotes degradation of target mRNA species. Plays a role in the regulation of circadian mRNA stability. Binds GTP and has GTPase activity. The chain is GTP-binding protein 1 (GTPBP1) from Pongo abelii (Sumatran orangutan).